Reading from the N-terminus, the 403-residue chain is Adenylate cyclase (403 aa).

Polar residues predominate over residues 1-16 (MSTEHTNTPRADSPQS). Residues 1–37 (MSTEHTNTPRADSPQSAAEAVRGARQHAPAATPAESD) are disordered. The tract at residues 31 to 60 (ATPAESDPILELAEAMEGPLRIPAHTPEAV) is pyruvate binding. Residues 238 to 347 (AVGFADLVSY…PTVNMAARLT (110 aa)) enclose the Guanylate cyclase domain. Positions 243 and 287 each coordinate Mg(2+).

The protein belongs to the adenylyl cyclase class-3 family. In terms of assembly, homodimer. Mg(2+) serves as cofactor.

It localises to the cytoplasm. The enzyme catalyses ATP = 3',5'-cyclic AMP + diphosphate. With respect to regulation, pyruvate-stimulated. Plays essential roles in regulation of cellular metabolism by catalyzing the synthesis of a second messenger, cAMP. This chain is Adenylate cyclase (cya), found in Glutamicibacter nicotianae (Arthrobacter nicotianae).